The sequence spans 247 residues: 1-(5-phosphoribosyl)-5-[(5-phosphoribosylamino)methylideneamino] imidazole-4-carboxamide isomerase (247 aa).

D8 serves as the catalytic Proton acceptor. The Proton donor role is filled by D129.

Belongs to the HisA/HisF family.

The protein localises to the cytoplasm. It catalyses the reaction 1-(5-phospho-beta-D-ribosyl)-5-[(5-phospho-beta-D-ribosylamino)methylideneamino]imidazole-4-carboxamide = 5-[(5-phospho-1-deoxy-D-ribulos-1-ylimino)methylamino]-1-(5-phospho-beta-D-ribosyl)imidazole-4-carboxamide. The protein operates within amino-acid biosynthesis; L-histidine biosynthesis; L-histidine from 5-phospho-alpha-D-ribose 1-diphosphate: step 4/9. The protein is 1-(5-phosphoribosyl)-5-[(5-phosphoribosylamino)methylideneamino] imidazole-4-carboxamide isomerase of Solidesulfovibrio magneticus (strain ATCC 700980 / DSM 13731 / RS-1) (Desulfovibrio magneticus).